A 552-amino-acid chain; its full sequence is Urocanate hydratase (552 aa).

NAD(+) contacts are provided by residues 49 to 50 (GG), Q127, 173 to 175 (GMG), D193, 239 to 240 (NA), 260 to 264 (QTSAH), 270 to 271 (YI), and Y319. C407 is an active-site residue. G489 lines the NAD(+) pocket.

Belongs to the urocanase family. NAD(+) serves as cofactor.

It localises to the cytoplasm. It carries out the reaction 4-imidazolone-5-propanoate = trans-urocanate + H2O. The protein operates within amino-acid degradation; L-histidine degradation into L-glutamate; N-formimidoyl-L-glutamate from L-histidine: step 2/3. In terms of biological role, catalyzes the conversion of urocanate to 4-imidazolone-5-propionate. The protein is Urocanate hydratase of Bacillus anthracis (strain CDC 684 / NRRL 3495).